We begin with the raw amino-acid sequence, 313 residues long: Carbamate kinase 2 (313 aa).

The protein belongs to the carbamate kinase family.

The protein resides in the cytoplasm. It catalyses the reaction hydrogencarbonate + NH4(+) + ATP = carbamoyl phosphate + ADP + H2O + H(+). It participates in metabolic intermediate metabolism; carbamoyl phosphate degradation; CO(2) and NH(3) from carbamoyl phosphate: step 1/1. The protein is Carbamate kinase 2 (arcC2) of Staphylococcus aureus (strain USA300).